The following is an 82-amino-acid chain: Neuromacin (82 aa).

The N-terminal stretch at 1-23 (MALLNKLLCFALVFMIFGEFVTP) is a signal peptide. 4 disulfide bridges follow: cysteine 25/cysteine 32, cysteine 47/cysteine 51, cysteine 61/cysteine 69, and cysteine 79/cysteine 81.

Belongs to the macin family.

The protein localises to the secreted. The polypeptide is Neuromacin (Hirudo medicinalis (Medicinal leech)).